The chain runs to 429 residues: Histidine--tRNA ligase (429 aa).

The protein belongs to the class-II aminoacyl-tRNA synthetase family. In terms of assembly, homodimer.

The protein resides in the cytoplasm. It catalyses the reaction tRNA(His) + L-histidine + ATP = L-histidyl-tRNA(His) + AMP + diphosphate + H(+). The chain is Histidine--tRNA ligase from Dechloromonas aromatica (strain RCB).